The primary structure comprises 365 residues: Eukaryotic translation initiation factor 3 subunit H (365 aa).

Residues Val-11 to Phe-160 form the MPN domain.

It belongs to the eIF-3 subunit H family. As to quaternary structure, component of the eukaryotic translation initiation factor 3 (eIF-3) complex.

It is found in the cytoplasm. In terms of biological role, component of the eukaryotic translation initiation factor 3 (eIF-3) complex, which is involved in protein synthesis of a specialized repertoire of mRNAs and, together with other initiation factors, stimulates binding of mRNA and methionyl-tRNAi to the 40S ribosome. The eIF-3 complex specifically targets and initiates translation of a subset of mRNAs involved in cell proliferation. This is Eukaryotic translation initiation factor 3 subunit H from Aspergillus fumigatus (strain CBS 144.89 / FGSC A1163 / CEA10) (Neosartorya fumigata).